Reading from the N-terminus, the 339-residue chain is UDP-N-acetylenolpyruvoylglucosamine reductase (339 aa).

Residues 18 to 189 (GIDVRARLLA…LRVRLRLTRR (172 aa)) enclose the FAD-binding PCMH-type domain. Arg-166 is an active-site residue. Ser-239 (proton donor) is an active-site residue. Glu-335 is a catalytic residue.

Belongs to the MurB family. The cofactor is FAD.

Its subcellular location is the cytoplasm. It catalyses the reaction UDP-N-acetyl-alpha-D-muramate + NADP(+) = UDP-N-acetyl-3-O-(1-carboxyvinyl)-alpha-D-glucosamine + NADPH + H(+). It participates in cell wall biogenesis; peptidoglycan biosynthesis. In terms of biological role, cell wall formation. The sequence is that of UDP-N-acetylenolpyruvoylglucosamine reductase from Pseudomonas aeruginosa (strain ATCC 15692 / DSM 22644 / CIP 104116 / JCM 14847 / LMG 12228 / 1C / PRS 101 / PAO1).